We begin with the raw amino-acid sequence, 487 residues long: Rhoptry apical surface protein 1 (487 aa).

The interval 337 to 487 is disordered; that stretch reads EVAMSGRGGH…EEEQPLLFTQ (151 aa). Composition is skewed to basic and acidic residues over residues 385–399 and 454–475; these read DGIRGRSPRGSDRRA and EKNEEASEADERPRERTEGVEY.

As to quaternary structure, interacts with RASP2.

It localises to the cytoplasmic vesicle. It is found in the secretory vesicle. The protein resides in the rhoptry membrane. The sequence is that of Rhoptry apical surface protein 1 from Toxoplasma gondii (strain ATCC 50853 / GT1).